The primary structure comprises 195 residues: Inosine triphosphate pyrophosphatase (195 aa).

13–18 (TGNAKK) contacts ITP. Residue Glu43 coordinates Mg(2+). ITP is bound by residues Lys55, 71–72 (DT), Lys88, 148–151 (FGWD), Lys171, and 176–177 (HR).

The protein belongs to the HAM1 NTPase family. As to quaternary structure, homodimer. The cofactor is Mg(2+). Requires Mn(2+) as cofactor.

The protein localises to the cytoplasm. The enzyme catalyses ITP + H2O = IMP + diphosphate + H(+). It catalyses the reaction dITP + H2O = dIMP + diphosphate + H(+). The catalysed reaction is XTP + H2O = XMP + diphosphate + H(+). It carries out the reaction N(6)-hydroxy-dATP + H2O = N(6)-hydroxy-dAMP + diphosphate + H(+). Functionally, pyrophosphatase that hydrolyzes the non-canonical purine nucleotides inosine triphosphate (ITP), deoxyinosine triphosphate (dITP) as well as 2'-deoxy-N-6-hydroxylaminopurine triphosphate (dHAPTP) and xanthosine 5'-triphosphate (XTP) to their respective monophosphate derivatives. The enzyme does not distinguish between the deoxy- and ribose forms. Probably excludes non-canonical purines from RNA and DNA precursor pools, thus preventing their incorporation into RNA and DNA and avoiding chromosomal lesions. This is Inosine triphosphate pyrophosphatase (itpa) from Xenopus laevis (African clawed frog).